The primary structure comprises 264 residues: MVKPLPRLRLQGFNNLTKALSFNIYDVCYARTEEERQRYIDYIDERYDADRLTQILTDVAEIIGANILNIARQDYDPQGASVTILISEEPVIDKKQAGKELISDAVVTHMDKSHITVHTYPETHPQEGIATFRADIDVATCGVISPLKALNYLIESLESDIVIMDYRVRGFTRDVKGKKHFIDHKINSIQNFLSKSIKSRYEMFDVNVYQENIFHTKMHLKDFDLDQYLFEEKARNLSFKERMKIEALLKLEIEELFHGRNLAE.

Residue serine 113 is the Schiff-base intermediate with substrate; via pyruvic acid of the active site. Residue serine 113 is modified to Pyruvic acid (Ser); by autocatalysis. Histidine 118 (proton acceptor; for processing activity) is an active-site residue. The Proton donor; for catalytic activity role is filled by cysteine 141.

This sequence belongs to the prokaryotic AdoMetDC family. Type 2 subfamily. In terms of assembly, heterooctamer of four alpha and four beta chains arranged as a tetramer of alpha/beta heterodimers. It depends on pyruvate as a cofactor. Is synthesized initially as an inactive proenzyme. Formation of the active enzyme involves a self-maturation process in which the active site pyruvoyl group is generated from an internal serine residue via an autocatalytic post-translational modification. Two non-identical subunits are generated from the proenzyme in this reaction, and the pyruvate is formed at the N-terminus of the alpha chain, which is derived from the carboxyl end of the proenzyme. The post-translation cleavage follows an unusual pathway, termed non-hydrolytic serinolysis, in which the side chain hydroxyl group of the serine supplies its oxygen atom to form the C-terminus of the beta chain, while the remainder of the serine residue undergoes an oxidative deamination to produce ammonia and the pyruvoyl group blocking the N-terminus of the alpha chain.

The catalysed reaction is S-adenosyl-L-methionine + H(+) = S-adenosyl 3-(methylsulfanyl)propylamine + CO2. Its pathway is amine and polyamine biosynthesis; S-adenosylmethioninamine biosynthesis; S-adenosylmethioninamine from S-adenosyl-L-methionine: step 1/1. Functionally, catalyzes the decarboxylation of S-adenosylmethionine to S-adenosylmethioninamine (dcAdoMet), the propylamine donor required for the synthesis of the polyamines spermine and spermidine from the diamine putrescine. In Xylella fastidiosa (strain Temecula1 / ATCC 700964), this protein is S-adenosylmethionine decarboxylase proenzyme.